Reading from the N-terminus, the 972-residue chain is Aminopeptidase N (972 aa).

Residues 2 to 17 (TSQGRTRTLLNLTPIR) are Cytoplasmic-facing. Residues 18–39 (LIVALFLVAAAVGLSIGLTYYF) traverse the membrane as a helical; Signal-anchor for type II membrane protein segment. Topologically, residues 40-972 (TRKAFDTSEK…LAAFFKKATL (933 aa)) are extracellular. Positions 47–62 (SEKPGKDDTGGKDKDN) are enriched in basic and acidic residues. The tract at residues 47-66 (SEKPGKDDTGGKDKDNSPSA) is disordered. N-linked (GlcNAc...) asparagine glycosylation is present at Asn99. Glu208 contacts substrate. A glycan (N-linked (GlcNAc...) asparagine) is linked at Asn227. 343 to 347 (GAMEN) provides a ligand contact to substrate. His379 lines the Zn(2+) pocket. Glu380 acts as the Proton acceptor in catalysis. 2 residues coordinate Zn(2+): His383 and Glu402. Residue Asn549 is glycosylated (N-linked (GlcNAc...) asparagine). Intrachain disulfides connect Cys759-Cys766 and Cys804-Cys840. An N-linked (GlcNAc...) asparagine glycan is attached at Asn858.

This sequence belongs to the peptidase M1 family. Zn(2+) is required as a cofactor.

It localises to the membrane. It carries out the reaction Release of an N-terminal amino acid, Xaa-|-Yaa- from a peptide, amide or arylamide. Xaa is preferably Ala, but may be most amino acids including Pro (slow action). When a terminal hydrophobic residue is followed by a prolyl residue, the two may be released as an intact Xaa-Pro dipeptide.. The protein is Aminopeptidase N of Haemonchus contortus (Barber pole worm).